Consider the following 223-residue polypeptide: Small ribosomal subunit protein uS3 (223 aa).

The 69-residue stretch at Ile-38 to Lys-106 folds into the KH type-2 domain.

Belongs to the universal ribosomal protein uS3 family. Part of the 30S ribosomal subunit. Forms a tight complex with proteins S10 and S14.

In terms of biological role, binds the lower part of the 30S subunit head. Binds mRNA in the 70S ribosome, positioning it for translation. The chain is Small ribosomal subunit protein uS3 from Pediococcus pentosaceus (strain ATCC 25745 / CCUG 21536 / LMG 10740 / 183-1w).